The sequence spans 208 residues: Large ribosomal subunit protein uL3 (208 aa).

The segment at 123 to 147 (RHGQSRGPMAHGSRYHRRPGSMGPV) is disordered.

Belongs to the universal ribosomal protein uL3 family. In terms of assembly, part of the 50S ribosomal subunit. Forms a cluster with proteins L14 and L19.

Functionally, one of the primary rRNA binding proteins, it binds directly near the 3'-end of the 23S rRNA, where it nucleates assembly of the 50S subunit. The polypeptide is Large ribosomal subunit protein uL3 (Streptococcus gordonii (strain Challis / ATCC 35105 / BCRC 15272 / CH1 / DL1 / V288)).